The primary structure comprises 153 residues: Probable succinate transporter subunit YjjB (153 aa).

Helical transmembrane passes span 7–27 (WALLQDMVLAAIPALGFAMVF), 51–71 (MIHFGMNIELASLVASIMIGI), 83–103 (VFTVAAVIPMFPGISAYTAMI), and 125–145 (FLKASFIVGALSIGLSLPGLW).

This sequence belongs to the ThrE exporter (TC 2.A.79) family. The transporter is composed of YjjB and YjjP.

Its subcellular location is the cell inner membrane. Involved in succinate export with YjjP. Both proteins are required for export. This chain is Probable succinate transporter subunit YjjB, found in Yersinia pestis bv. Antiqua (strain Antiqua).